An 88-amino-acid chain; its full sequence is Exodeoxyribonuclease 7 small subunit (88 aa).

This sequence belongs to the XseB family. In terms of assembly, heterooligomer composed of large and small subunits.

The protein resides in the cytoplasm. The enzyme catalyses Exonucleolytic cleavage in either 5'- to 3'- or 3'- to 5'-direction to yield nucleoside 5'-phosphates.. Bidirectionally degrades single-stranded DNA into large acid-insoluble oligonucleotides, which are then degraded further into small acid-soluble oligonucleotides. The polypeptide is Exodeoxyribonuclease 7 small subunit (Bordetella bronchiseptica (strain ATCC BAA-588 / NCTC 13252 / RB50) (Alcaligenes bronchisepticus)).